A 448-amino-acid polypeptide reads, in one-letter code: 3-phosphoshikimate 1-carboxyvinyltransferase (448 aa).

3-phosphoshikimate contacts are provided by K38, S39, and R43. K38 lines the phosphoenolpyruvate pocket. Residues G111 and R140 each coordinate phosphoenolpyruvate. 3-phosphoshikimate-binding residues include S185, Q187, D335, and K362. Q187 contacts phosphoenolpyruvate. D335 serves as the catalytic Proton acceptor. Positions 366 and 408 each coordinate phosphoenolpyruvate.

The protein belongs to the EPSP synthase family. As to quaternary structure, monomer.

It is found in the cytoplasm. The catalysed reaction is 3-phosphoshikimate + phosphoenolpyruvate = 5-O-(1-carboxyvinyl)-3-phosphoshikimate + phosphate. It participates in metabolic intermediate biosynthesis; chorismate biosynthesis; chorismate from D-erythrose 4-phosphate and phosphoenolpyruvate: step 6/7. Functionally, catalyzes the transfer of the enolpyruvyl moiety of phosphoenolpyruvate (PEP) to the 5-hydroxyl of shikimate-3-phosphate (S3P) to produce enolpyruvyl shikimate-3-phosphate and inorganic phosphate. The polypeptide is 3-phosphoshikimate 1-carboxyvinyltransferase (Synechococcus elongatus (strain ATCC 33912 / PCC 7942 / FACHB-805) (Anacystis nidulans R2)).